Consider the following 162-residue polypeptide: Phosphopantetheine adenylyltransferase (162 aa).

Residue Ser-11 participates in substrate binding. ATP contacts are provided by residues 11 to 12 and His-19; that span reads SF. Substrate contacts are provided by Lys-43, Val-76, and Arg-90. Residues 91–93, Glu-101, and 126–132 contribute to the ATP site; these read GLR and HLYISSS.

This sequence belongs to the bacterial CoaD family. In terms of assembly, homohexamer. Requires Mg(2+) as cofactor.

The protein resides in the cytoplasm. The catalysed reaction is (R)-4'-phosphopantetheine + ATP + H(+) = 3'-dephospho-CoA + diphosphate. Its pathway is cofactor biosynthesis; coenzyme A biosynthesis; CoA from (R)-pantothenate: step 4/5. Functionally, reversibly transfers an adenylyl group from ATP to 4'-phosphopantetheine, yielding dephospho-CoA (dPCoA) and pyrophosphate. In Streptococcus pneumoniae (strain Taiwan19F-14), this protein is Phosphopantetheine adenylyltransferase.